An 88-amino-acid chain; its full sequence is Phosphocarrier protein HPr (88 aa).

One can recognise an HPr domain in the interval 1 to 88; the sequence is MKTQQFTVID…TLLTEMGLAQ (88 aa). The Pros-phosphohistidine intermediate role is filled by His15. Position 46 is a phosphoserine; by HPrK/P (Ser46).

Belongs to the HPr family.

The protein localises to the cytoplasm. Its activity is regulated as follows. Phosphorylation on Ser-46 inhibits the phosphoryl transfer from enzyme I to HPr. General (non sugar-specific) component of the phosphoenolpyruvate-dependent sugar phosphotransferase system (sugar PTS). This major carbohydrate active-transport system catalyzes the phosphorylation of incoming sugar substrates concomitantly with their translocation across the cell membrane. The phosphoryl group from phosphoenolpyruvate (PEP) is transferred to the phosphoryl carrier protein HPr by enzyme I. Phospho-HPr then transfers it to the PTS EIIA domain. Its function is as follows. P-Ser-HPr interacts with the catabolite control protein A (CcpA), forming a complex that binds to DNA at the catabolite response elements cre, operator sites preceding a large number of catabolite-regulated genes. Thus, P-Ser-HPr is a corepressor in carbon catabolite repression (CCR), a mechanism that allows bacteria to coordinate and optimize the utilization of available carbon sources. P-Ser-HPr also plays a role in inducer exclusion, in which it probably interacts with several non-PTS permeases and inhibits their transport activity. The polypeptide is Phosphocarrier protein HPr (ptsH) (Lysinibacillus sphaericus (Bacillus sphaericus)).